The primary structure comprises 298 residues: Inosose dehydratase (298 aa).

This sequence belongs to the IolE/MocC family. It depends on glutathione as a cofactor. Requires Co(2+) as cofactor. Mn(2+) serves as cofactor.

It carries out the reaction scyllo-inosose = 3D-3,5/4-trihydroxycyclohexane-1,2-dione + H2O. Functionally, catalyzes the dehydration of inosose (2-keto-myo-inositol, 2KMI or 2,4,6/3,5-pentahydroxycyclohexanone) to 3D-(3,5/4)-trihydroxycyclohexane-1,2-dione (D-2,3-diketo-4-deoxy-epi-inositol). The protein is Inosose dehydratase of Glaesserella parasuis serovar 5 (strain SH0165) (Haemophilus parasuis).